We begin with the raw amino-acid sequence, 83 residues long: Large ribosomal subunit protein bL27 (83 aa).

Positions 1–21 are disordered; sequence MAHKRSSGAGRNGRDSNPKYL.

This sequence belongs to the bacterial ribosomal protein bL27 family.

This chain is Large ribosomal subunit protein bL27, found in Kosmotoga olearia (strain ATCC BAA-1733 / DSM 21960 / TBF 19.5.1).